The sequence spans 1017 residues: Probable disease resistance protein RDL5 (1017 aa).

The stretch at Gln-25–Lys-52 forms a coiled coil. The NB-ARC domain occupies Lys-147–Tyr-460. Gly-190–Thr-197 lines the ATP pocket. 7 LRR repeats span residues Leu-602–Leu-627, Met-649–Lys-674, Leu-675–Thr-699, Pro-768–Lys-791, Leu-792–Gln-819, Met-841–Ser-865, and Met-937–Tyr-962.

It belongs to the disease resistance NB-LRR family.

Functionally, potential disease resistance protein. This is Probable disease resistance protein RDL5 (RDL5) from Arabidopsis thaliana (Mouse-ear cress).